A 564-amino-acid polypeptide reads, in one-letter code: Type 2 DNA topoisomerase 6 subunit B (564 aa).

Residues N46, D78, 99 to 100, 109 to 116, and K471 contribute to the ATP site; these read TK and GQQGIGIS.

It belongs to the TOP6B family. Homodimer. Heterotetramer of two Top6A and two Top6B chains.

The catalysed reaction is ATP-dependent breakage, passage and rejoining of double-stranded DNA.. Functionally, relaxes both positive and negative superturns and exhibits a strong decatenase activity. The protein is Type 2 DNA topoisomerase 6 subunit B of Pyrococcus abyssi (strain GE5 / Orsay).